We begin with the raw amino-acid sequence, 491 residues long: Katanin p60 ATPase-containing subunit A1 (491 aa).

An interaction with KATNB1 region spans residues 1–29; it reads MSLLMISENVKLAREYALLGNYDSAMVYY. An interaction with dynein and NDEL1 region spans residues 1–75; sequence MSLLMISENV…VKDIMKTLES (75 aa). Residues 1 to 185 form an interaction with microtubules region; the sequence is MSLLMISENV…EPETNKFDST (185 aa). Serine 42 and serine 109 each carry phosphoserine; by DYRK2. Positions 87–185 are disordered; sequence QHDLPASEGE…EPETNKFDST (99 aa). Residues 117–144 show a composition bias toward polar residues; sequence SSQYSDPKSHGNRPSTTVRVHRSSAQNV. Position 133 is a phosphothreonine; by DYRK2 (threonine 133). Basic and acidic residues predominate over residues 145–169; it reads HNDRGKAVRCREKKEQNKGREEKNK. Phosphoserine is present on serine 170. ATP is bound at residue 249–256; the sequence is GPPGTGKT.

Belongs to the AAA ATPase family. Katanin p60 subunit A1 subfamily. Can homooligomerize into hexameric rings, which may be promoted by interaction with microtubules. Interacts with KATNB1, which may serve as a targeting subunit. Interacts with ASPM; the katanin complex formation KATNA1:KATNB1 is required for the association of ASPM. Interacts with dynein and NDEL1. Associates with the E3 ligase complex containing DYRK2, EDD/UBR5, DDB1 and DCAF1 proteins (EDVP complex). Interacts with KLHL42 (via the kelch domains). Interacts with CUL3; the interaction is enhanced by KLHL42. Interacts with KATNB1 and KATNBL1. Interacts with CAMSAP2 and CAMSAP3; leading to regulate the length of CAMSAP-decorated microtubule stretches. Post-translationally, phosphorylation by DYRK2 triggers ubiquitination and subsequent degradation. In terms of processing, ubiquitinated by the BCR(KLHL42) E3 ubiquitin ligase complex, leading to its proteasomal degradation. Ubiquitinated by the EDVP E3 ligase complex and subsequently targeted for proteasomal degradation.

Its subcellular location is the cytoplasm. The protein resides in the midbody. It localises to the cytoskeleton. The protein localises to the microtubule organizing center. It is found in the centrosome. Its subcellular location is the spindle pole. The protein resides in the spindle. It catalyses the reaction n ATP + n H2O + a microtubule = n ADP + n phosphate + (n+1) alpha/beta tubulin heterodimers.. Its activity is regulated as follows. ATPase activity is stimulated by microtubules, which promote homooligomerization. ATP-dependent microtubule severing is stimulated by interaction with KATNB1. Its function is as follows. Catalytic subunit of a complex which severs microtubules in an ATP-dependent manner. Microtubule severing may promote rapid reorganization of cellular microtubule arrays and the release of microtubules from the centrosome following nucleation. Microtubule release from the mitotic spindle poles may allow depolymerization of the microtubule end proximal to the spindle pole, leading to poleward microtubule flux and poleward motion of chromosome. Microtubule release within the cell body of neurons may be required for their transport into neuronal processes by microtubule-dependent motor proteins. This transport is required for axonal growth. The polypeptide is Katanin p60 ATPase-containing subunit A1 (Homo sapiens (Human)).